The chain runs to 429 residues: UDP-N-acetylglucosamine 1-carboxyvinyltransferase (429 aa).

Residue 22-23 (KN) participates in phosphoenolpyruvate binding. Arg-102 contacts UDP-N-acetyl-alpha-D-glucosamine. Cys-126 (proton donor) is an active-site residue. At Cys-126 the chain carries 2-(S-cysteinyl)pyruvic acid O-phosphothioketal. Residues 131–135 (RPVDL), Asp-316, and Ile-338 contribute to the UDP-N-acetyl-alpha-D-glucosamine site.

It belongs to the EPSP synthase family. MurA subfamily.

The protein localises to the cytoplasm. The catalysed reaction is phosphoenolpyruvate + UDP-N-acetyl-alpha-D-glucosamine = UDP-N-acetyl-3-O-(1-carboxyvinyl)-alpha-D-glucosamine + phosphate. It functions in the pathway cell wall biogenesis; peptidoglycan biosynthesis. In terms of biological role, cell wall formation. Adds enolpyruvyl to UDP-N-acetylglucosamine. This is UDP-N-acetylglucosamine 1-carboxyvinyltransferase from Rhodopseudomonas palustris (strain HaA2).